Consider the following 86-residue polypeptide: Triple QxxK/R motif-containing protein (86 aa).

The helical transmembrane segment at 51–71 (VGLVLAAILALLLAFYAFFYL) threads the bilayer.

It belongs to the TRIQK family.

The protein resides in the endoplasmic reticulum membrane. Its function is as follows. May play a role in cell growth and maintenance of cell morphology. In Homo sapiens (Human), this protein is Triple QxxK/R motif-containing protein (TRIQK).